We begin with the raw amino-acid sequence, 178 residues long: Thioredoxin F1, chloroplastic (178 aa).

The tract at residues 1–22 (MPLSLRLSPSPTALSPTTGGFG) is disordered. The N-terminal 57 residues, 1-57 (MPLSLRLSPSPTALSPTTGGFGPSRKQCRIPYSGVPTTKIGFCSLDSRKRGDSSVVR), are a transit peptide targeting the chloroplast. Residues 7–18 (LSPSPTALSPTT) are compositionally biased toward polar residues. Residues 58 to 174 (CSLETVNVSV…LVAAIETARS (117 aa)) form the Thioredoxin domain. Active-site nucleophile residues include C99 and C102. The cysteines at positions 99 and 102 are disulfide-linked. C126 carries the S-glutathionyl cysteine; transient modification.

Belongs to the thioredoxin family. Plant F-type subfamily. In terms of processing, glutathionylation at Cys-126 decreases its ability to be reduced by ferredoxin-thioredoxin reductase and reduces its efficiency in activating target chloroplastic enzymes.

It localises to the plastid. The protein resides in the chloroplast stroma. Thiol-disulfide oxidoreductase involved in the redox regulation of enzymes of both reductive pentose phosphate pathway (Calvin-Benson cycle) and oxidative pentose phosphate pathway. Under light or reducing conditions, activates in chloroplast the glyceraldehyde-3-phosphate dehydrogenase, the phosphoribulokinase and the fructose-1,6-bisphosphate phosphatase, and inhibits the glucose-6-phosphate dehydrogenase. This Arabidopsis thaliana (Mouse-ear cress) protein is Thioredoxin F1, chloroplastic.